Consider the following 185-residue polypeptide: Ribosome-recycling factor (185 aa).

This sequence belongs to the RRF family.

Its subcellular location is the cytoplasm. In terms of biological role, responsible for the release of ribosomes from messenger RNA at the termination of protein biosynthesis. May increase the efficiency of translation by recycling ribosomes from one round of translation to another. The sequence is that of Ribosome-recycling factor from Zymomonas mobilis subsp. mobilis (strain ATCC 31821 / ZM4 / CP4).